We begin with the raw amino-acid sequence, 351 residues long: DNA integrity scanning protein DisA (351 aa).

The DAC domain maps to 4–142 (RSGFWQVLQQ…GPMKYILRDF (139 aa)). ATP is bound by residues glycine 71, leucine 89, and 102-106 (TRHRT).

Belongs to the DisA family. As to quaternary structure, homooctamer. Mg(2+) serves as cofactor.

It carries out the reaction 2 ATP = 3',3'-c-di-AMP + 2 diphosphate. In terms of biological role, participates in a DNA-damage check-point that is active prior to asymmetric division when DNA is damaged. DisA forms globular foci that rapidly scan along the chromosomes during sporulation, searching for lesions. When a lesion is present, DisA pauses at the lesion site. This triggers a cellular response that culminates in a temporary block in sporulation initiation. Functionally, also has diadenylate cyclase activity, catalyzing the condensation of 2 ATP molecules into cyclic di-AMP (c-di-AMP). c-di-AMP acts as a signaling molecule that couples DNA integrity with progression of sporulation. The rise in c-di-AMP level generated by DisA while scanning the chromosome, operates as a positive signal that advances sporulation; upon encountering a lesion, the DisA focus arrests at the damaged site and halts c-di-AMP synthesis. The polypeptide is DNA integrity scanning protein DisA (Symbiobacterium thermophilum (strain DSM 24528 / JCM 14929 / IAM 14863 / T)).